Reading from the N-terminus, the 410-residue chain is Putative odorant receptor 65c (410 aa).

The Cytoplasmic segment spans residues 1–59; the sequence is MDIRGNVHRFVKFYIDGWKHFRDPTMESSYSAVYYWREQMKAMFLYTTSKERQMPYRSS. Residues 60-80 form a helical membrane-spanning segment; that stretch reads WHTLVIIQATVCFLTMCYGVT. The Extracellular portion of the chain corresponds to 81-92; that stretch reads ESLGDKVQMGRD. A helical transmembrane segment spans residues 93 to 113; it reads IAFIIGFFYIAFKIYYFQWYG. The Cytoplasmic portion of the chain corresponds to 114 to 148; that stretch reads DELDEVVEALETFHPWAQKGPGAVDYRTAKRWYFT. The chain crosses the membrane as a helical span at residues 149–169; sequence LAFFLASSWLVFLCIFILLLI. The Extracellular segment spans residues 170-222; that stretch reads TSPLWVHQQILPLHAAFPFQWHEKSIHPISHAFIYLFQTWNVMYFLTWLVCIE. The helical transmembrane segment at 223 to 243 threads the bilayer; that stretch reads GLSVSIYVEITFAIEVLCLEL. Over 244 to 279 the chain is Cytoplasmic; it reads RHLHQRCHGYEQLRLETNRLVQFHQKIVHILDHTNK. The helical transmembrane segment at 280 to 300 threads the bilayer; the sequence is VFHGTLIMQMGVNFFLVSLSV. At 301-312 the chain is on the extracellular side; it reads LEAMEARKDPKV. The chain crosses the membrane as a helical span at residues 313 to 333; it reads VAQFAVLMLLALGHLSMWSYF. Over 334–385 the chain is Cytoplasmic; it reads GDLLSQKSLTISEAAYEAYDPIKGSKDVYRDLCLIIRRGQEPLIMRASPFPS. The helical transmembrane segment at 386 to 406 threads the bilayer; it reads FNFINYSAILNQCYGILTFLL. At 407-410 the chain is on the extracellular side; it reads KTLD.

This sequence belongs to the insect chemoreceptor superfamily. Heteromeric odorant receptor channel (TC 1.A.69) family. Or49a subfamily. Interacts with Orco. Complexes exist early in the endomembrane system in olfactory sensory neurons (OSNs), coupling these complexes to the conserved ciliary trafficking pathway.

It localises to the cell membrane. Its function is as follows. Odorant receptor which mediates acceptance or avoidance behavior, depending on its substrates. The odorant receptor repertoire encodes a large collection of odor stimuli that vary widely in identity, intensity, and duration. May form a complex with Orco to form odorant-sensing units, providing sensitive and prolonged odorant signaling and calcium permeability. This chain is Putative odorant receptor 65c (Or65c), found in Drosophila melanogaster (Fruit fly).